Reading from the N-terminus, the 198-residue chain is A-type ATP synthase subunit E (198 aa).

The protein belongs to the V-ATPase E subunit family. Has multiple subunits with at least A(3), B(3), C, D, E, F, H, I and proteolipid K(x).

The protein resides in the cell membrane. In terms of biological role, component of the A-type ATP synthase that produces ATP from ADP in the presence of a proton gradient across the membrane. The chain is A-type ATP synthase subunit E from Pyrococcus horikoshii (strain ATCC 700860 / DSM 12428 / JCM 9974 / NBRC 100139 / OT-3).